The primary structure comprises 156 residues: Ribosomal RNA large subunit methyltransferase H (156 aa).

Residues Leu-72, Gly-104, and 123–128 (LSKMTL) each bind S-adenosyl-L-methionine.

It belongs to the RNA methyltransferase RlmH family. As to quaternary structure, homodimer.

It is found in the cytoplasm. It catalyses the reaction pseudouridine(1915) in 23S rRNA + S-adenosyl-L-methionine = N(3)-methylpseudouridine(1915) in 23S rRNA + S-adenosyl-L-homocysteine + H(+). Specifically methylates the pseudouridine at position 1915 (m3Psi1915) in 23S rRNA. This chain is Ribosomal RNA large subunit methyltransferase H, found in Maridesulfovibrio salexigens (strain ATCC 14822 / DSM 2638 / NCIMB 8403 / VKM B-1763) (Desulfovibrio salexigens).